The sequence spans 635 residues: MSASLSEQYEEKVRPCIDLIDSLRALGVEKDLALPAIAVIGDQSSGKSSVLEALSGVALPRGSGIVTRCPLELKMKRSREEDFWHGKIKYKKDHDEDYEEEIQNPADVEKKIREAQDHMAGVGVGISDELISLEVTSADVPDLTLIDLPGIARVAVKGQPENIGEQIKRLIKKFITKQETINLVVVPSNVDIATTEALKMAQEVDPNGERTLGILTKPDLVDKGTEETVVSIIHNEIIYLTKGYMIVRCRGQKEIMDRVSLHEATEKEKDFFKDHPHFSTLYEEGMATIPNLAEKLTLELVHHIELSLPRLEEQIDIKLADSQAELDRYGSGPPTEPAERICFLIDKVTAFTQDTINLTTGEELKNIQHLNIFSSLRRQFALWKMHLDDSGETFKSRIEKEVNEYEEKYRGRELPGFINYKTFEVIVKDQIKQLEEPAIRRLKEISDLIRKGFIQLAQNSFLGFPNLLKMAKTKIECIKQVKESEAETMLRTQFKMELIIYTQDSMYSDTLSTLKVKEEEGERQKVGILPNSYSISCSLYNHSNNRATLEELMRHLKSYYSIASKRLADQLPLVIRYLLLQESAAQLQREMLQLMQDKNAIDHLLKEDHDIGNKRNNLQSRQKRLMEARNYLVKF.

The region spanning 31–309 (DLALPAIAVI…LVHHIELSLP (279 aa)) is the Dynamin-type G domain. Positions 41–48 (GDQSSGKS) are G1 motif. 41 to 48 (GDQSSGKS) is a GTP binding site. Residues 66 to 68 (VTR) form a G2 motif region. Residues 147 to 150 (DLPG) are G3 motif. GTP is bound by residues 147–151 (DLPGI) and 216–219 (TKPD). Residues 216–219 (TKPD) are G4 motif. The interval 248 to 251 (RCRG) is G5 motif. Residues 549-635 (LEELMRHLKS…MEARNYLVKF (87 aa)) enclose the GED domain.

The protein belongs to the TRAFAC class dynamin-like GTPase superfamily. Dynamin/Fzo/YdjA family.

The protein resides in the cytoplasm. The chain is Interferon-induced GTP-binding protein Mx1 (mx1) from Ictalurus punctatus (Channel catfish).